Here is a 148-residue protein sequence, read N- to C-terminus: Small ribosomal subunit protein uS9 (148 aa).

This sequence belongs to the universal ribosomal protein uS9 family.

The chain is Small ribosomal subunit protein uS9 (RpS16) from Aedes aegypti (Yellowfever mosquito).